The sequence spans 232 residues: 5'-methylthioadenosine/S-adenosylhomocysteine nucleosidase (232 aa).

Glu12 functions as the Proton acceptor in the catalytic mechanism. Substrate-binding positions include Gly78, Ile152, and 173–174; that span reads ME. The active-site Proton donor is Asp197.

Belongs to the PNP/UDP phosphorylase family. MtnN subfamily. In terms of assembly, homodimer.

It catalyses the reaction S-adenosyl-L-homocysteine + H2O = S-(5-deoxy-D-ribos-5-yl)-L-homocysteine + adenine. It carries out the reaction S-methyl-5'-thioadenosine + H2O = 5-(methylsulfanyl)-D-ribose + adenine. The catalysed reaction is 5'-deoxyadenosine + H2O = 5-deoxy-D-ribose + adenine. The protein operates within amino-acid biosynthesis; L-methionine biosynthesis via salvage pathway; S-methyl-5-thio-alpha-D-ribose 1-phosphate from S-methyl-5'-thioadenosine (hydrolase route): step 1/2. In terms of biological role, catalyzes the irreversible cleavage of the glycosidic bond in both 5'-methylthioadenosine (MTA) and S-adenosylhomocysteine (SAH/AdoHcy) to adenine and the corresponding thioribose, 5'-methylthioribose and S-ribosylhomocysteine, respectively. Also cleaves 5'-deoxyadenosine, a toxic by-product of radical S-adenosylmethionine (SAM) enzymes, into 5-deoxyribose and adenine. Thus, is required for in vivo function of the radical SAM enzymes biotin synthase and lipoic acid synthase, that are inhibited by 5'-deoxyadenosine accumulation. The sequence is that of 5'-methylthioadenosine/S-adenosylhomocysteine nucleosidase from Escherichia coli O9:H4 (strain HS).